A 560-amino-acid chain; its full sequence is CTP synthase (560 aa).

Residues 1–272 (MSIGDVCSAR…DTQILSHFGM (272 aa)) form an amidoligase domain region. S20 serves as a coordination point for CTP. Position 20 (S20) interacts with UTP. ATP contacts are provided by residues 21–26 (SLGKGL) and D78. Mg(2+) contacts are provided by D78 and E146. CTP contacts are provided by residues 153–155 (DIE), 193–198 (KTKPTQ), and K229. UTP-binding positions include 193-198 (KTKPTQ) and K229. A Glutamine amidotransferase type-1 domain is found at 297-539 (TIAIIGKYTK…VQNVLQIKQR (243 aa)). Position 356 (G356) interacts with L-glutamine. The active-site Nucleophile; for glutamine hydrolysis is the C383. L-glutamine is bound by residues 384–387 (MGMQ), E407, and R467. Catalysis depends on residues H512 and E514.

It belongs to the CTP synthase family. As to quaternary structure, homotetramer.

The enzyme catalyses UTP + L-glutamine + ATP + H2O = CTP + L-glutamate + ADP + phosphate + 2 H(+). It catalyses the reaction L-glutamine + H2O = L-glutamate + NH4(+). The catalysed reaction is UTP + NH4(+) + ATP = CTP + ADP + phosphate + 2 H(+). It participates in pyrimidine metabolism; CTP biosynthesis via de novo pathway; CTP from UDP: step 2/2. Its activity is regulated as follows. Allosterically activated by GTP, when glutamine is the substrate; GTP has no effect on the reaction when ammonia is the substrate. The allosteric effector GTP functions by stabilizing the protein conformation that binds the tetrahedral intermediate(s) formed during glutamine hydrolysis. Inhibited by the product CTP, via allosteric rather than competitive inhibition. Functionally, catalyzes the ATP-dependent amination of UTP to CTP with either L-glutamine or ammonia as the source of nitrogen. Regulates intracellular CTP levels through interactions with the four ribonucleotide triphosphates. The chain is CTP synthase from Anaplasma marginale (strain Florida).